A 205-amino-acid chain; its full sequence is Recombination protein RecR (205 aa).

The C4-type zinc finger occupies 60-75 (CKVCHNISDTETCQIC). The Toprim domain maps to 83–178 (SMVCVVENIR…KLSVLARGVS (96 aa)).

This sequence belongs to the RecR family.

In terms of biological role, may play a role in DNA repair. It seems to be involved in an RecBC-independent recombinational process of DNA repair. It may act with RecF and RecO. The sequence is that of Recombination protein RecR from Bacteroides fragilis (strain ATCC 25285 / DSM 2151 / CCUG 4856 / JCM 11019 / LMG 10263 / NCTC 9343 / Onslow / VPI 2553 / EN-2).